Consider the following 509-residue polypeptide: Ribonuclease Y (509 aa).

A helical transmembrane segment spans residues 1–21 (MIILVAVVTAVISFGLGYVVA). The region spanning 199-259 (TVSTVSLPSD…IRREIARLTL (61 aa)) is the KH domain. Residues 325-418 (VLDHSIEVAQ…VAAADALSAA (94 aa)) form the HD domain.

This sequence belongs to the RNase Y family.

Its subcellular location is the cell membrane. Its function is as follows. Endoribonuclease that initiates mRNA decay. The chain is Ribonuclease Y from Pseudothermotoga lettingae (strain ATCC BAA-301 / DSM 14385 / NBRC 107922 / TMO) (Thermotoga lettingae).